The primary structure comprises 198 residues: Recombination protein RecR (198 aa).

The C4-type zinc finger occupies 58-73 (CSVCNNLTEKDPCDFC). The Toprim domain occupies 81 to 175 (NLICVVESPK…KVTRIAHGLP (95 aa)).

The protein belongs to the RecR family.

Its function is as follows. May play a role in DNA repair. It seems to be involved in an RecBC-independent recombinational process of DNA repair. It may act with RecF and RecO. The chain is Recombination protein RecR from Halothermothrix orenii (strain H 168 / OCM 544 / DSM 9562).